Reading from the N-terminus, the 252-residue chain is Chitooligosaccharide deacetylase (252 aa).

2 residues coordinate Mg(2+): His61 and His125.

Belongs to the YdjC deacetylase family. ChbG subfamily. In terms of assembly, homodimer. Mg(2+) serves as cofactor.

It localises to the cytoplasm. The enzyme catalyses N,N'-diacetylchitobiose + H2O = N-acetyl-beta-D-glucosaminyl-(1-&gt;4)-D-glucosamine + acetate. It carries out the reaction diacetylchitobiose-6'-phosphate + H2O = N'-monoacetylchitobiose-6'-phosphate + acetate. It participates in glycan degradation; chitin degradation. Functionally, involved in the degradation of chitin. ChbG is essential for growth on the acetylated chitooligosaccharides chitobiose and chitotriose but is dispensable for growth on cellobiose and chitosan dimer, the deacetylated form of chitobiose. Deacetylation of chitobiose-6-P and chitotriose-6-P is necessary for both the activation of the chb promoter by the regulatory protein ChbR and the hydrolysis of phosphorylated beta-glucosides by the phospho-beta-glucosidase ChbF. Catalyzes the removal of only one acetyl group from chitobiose-6-P to yield monoacetylchitobiose-6-P, the inducer of ChbR and the substrate of ChbF. The sequence is that of Chitooligosaccharide deacetylase from Salmonella typhi.